The sequence spans 274 residues: MDIVLLVKAAVMGIVEGLTEFLPISSTGHLILAGSLLGFDDDKAKVFDIAIQTGAIFAVILVYWQKIHSTVVALPRQAKARRLALNVVIGFLPAVVLGLLFGKMIKAHLFIPVVVASTFIIGGFIILWAEKRPPGSVRIEHVDDMTMWDALKVGLVQCFAMIPGTSRSGSTIIGGMLLGLSRQAATDFSFFLAIPTLIGAGAYSLYKERALLSVADIPLFSVGLVFSFISAWLCVRWLLKYISTHDFIPFAWYRIAFGIVVLATAWTGTVVWAE.

Transmembrane regions (helical) follow at residues 44–64 (AKVFDIAIQTGAIFAVILVYW), 85–105 (LNVVIGFLPAVVLGLLFGKMI), 109–129 (LFIPVVVASTFIIGGFIILWA), 185–205 (ATDFSFFLAIPTLIGAGAYSL), 214–234 (VADIPLFSVGLVFSFISAWLC), and 247–267 (FIPFAWYRIAFGIVVLATAWT).

The protein belongs to the UppP family.

The protein resides in the cell inner membrane. The enzyme catalyses di-trans,octa-cis-undecaprenyl diphosphate + H2O = di-trans,octa-cis-undecaprenyl phosphate + phosphate + H(+). Its function is as follows. Catalyzes the dephosphorylation of undecaprenyl diphosphate (UPP). Confers resistance to bacitracin. This Variovorax paradoxus (strain S110) protein is Undecaprenyl-diphosphatase.